The chain runs to 248 residues: Putative TrmH family tRNA/rRNA methyltransferase (248 aa).

Residues Gly196, Ile216, and Leu225 each contribute to the S-adenosyl-L-methionine site.

It belongs to the class IV-like SAM-binding methyltransferase superfamily. RNA methyltransferase TrmH family.

This Staphylococcus aureus (strain COL) protein is Putative TrmH family tRNA/rRNA methyltransferase.